Here is a 529-residue protein sequence, read N- to C-terminus: uncharacterized protein (529 aa).

Over residues 1–11 the composition is skewed to basic and acidic residues; the sequence is MSSSKIKELRE. 4 disordered regions span residues 1-222, 237-256, 271-372, and 393-488; these read MSSS…IPYS, PFLESKVLPQNNETSDEENV, AFLQ…TAAP, and GSGN…PSFT. Polar residues predominate over residues 27–40; sequence MQQNQPRPATTTPP. Residues 83–95 are compositionally biased toward basic residues; it reads TKGRAHPRSRRPP. Positions 110–125 are enriched in polar residues; that stretch reads NTGSTKAADTKSSVEA. The residue at position 128 (serine 128) is a Phosphoserine. Positions 170 to 199 are enriched in polar residues; the sequence is TTKAVEATTSKASSAHTDTLATSASNSDRG. A Phosphoserine modification is found at serine 217. Positions 237-249 are enriched in polar residues; it reads PFLESKVLPQNNE. A compositionally biased stretch (low complexity) spans 321–334; it reads SSPLSFSASKSPAA. Residues 336–362 show a composition bias toward polar residues; sequence DSSTKTPTEQVNVVSKQAPTTSSTSVI. A compositionally biased stretch (basic and acidic residues) spans 409–426; sequence ERTKSLSKESPVEPEKPA. The span at 430 to 455 shows a compositional bias: polar residues; sequence ATSSSTPTTENKESWTNQGIKSSQQR. Positions 456 to 470 are enriched in low complexity; the sequence is SANASPATSPSNQAS. Residues 471–488 are compositionally biased toward polar residues; that stretch reads IHASFTKESSTHSSPSFT.

It is found in the cytoplasm. This is an uncharacterized protein from Schizosaccharomyces pombe (strain 972 / ATCC 24843) (Fission yeast).